Reading from the N-terminus, the 518-residue chain is Bifunctional methyltransferase (518 aa).

The tract at residues 1 to 300 (MQYSIKQILS…SHNRVIEISP (300 aa)) is hemK. An RF MTase region spans residues 1-302 (MQYSIKQILS…NRVIEISPIN (302 aa)). S-adenosyl-L-methionine is bound by residues 140-144 (GTGSG), Asp-163, Trp-192, Asn-207, Glu-347, Glu-372, Asn-399, and Asp-421. 207-210 (NPPY) contributes to the substrate binding site. The tract at residues 301–518 (INLNRSYARR…MILQHALTDH (218 aa)) is tRNA (guanine-N(7)-)-methyltransferase. The tRNA MTase stretch occupies residues 305 to 518 (RSYARRIGKS…MILQHALTDH (214 aa)). The active site involves Asp-421. Residues Lys-425 and Asp-457 each coordinate substrate.

The protein in the C-terminal section; belongs to the class I-like SAM-binding methyltransferase superfamily. TrmB family. This sequence in the N-terminal section; belongs to the protein N5-glutamine methyltransferase family. PrmC subfamily.

The enzyme catalyses L-glutaminyl-[peptide chain release factor] + S-adenosyl-L-methionine = N(5)-methyl-L-glutaminyl-[peptide chain release factor] + S-adenosyl-L-homocysteine + H(+). The catalysed reaction is guanosine(46) in tRNA + S-adenosyl-L-methionine = N(7)-methylguanosine(46) in tRNA + S-adenosyl-L-homocysteine. Functionally, methylates the class 1 translation termination release factors RF1/PrfA and RF2/PrfB on the glutamine residue of the universally conserved GGQ motif. Its function is as follows. Catalyzes the formation of N(7)-methylguanine at position 46 (m7G46) in tRNA. The sequence is that of Bifunctional methyltransferase (prmC/trmB) from Rickettsia prowazekii (strain Madrid E).